Consider the following 451-residue polypeptide: Probable phosphoglucosamine mutase (451 aa).

Serine 96 acts as the Phosphoserine intermediate in catalysis. Mg(2+) is bound by residues serine 96, aspartate 233, aspartate 235, and aspartate 237. A Phosphoserine modification is found at serine 96.

The protein belongs to the phosphohexose mutase family. Mg(2+) is required as a cofactor. Activated by phosphorylation.

The catalysed reaction is alpha-D-glucosamine 1-phosphate = D-glucosamine 6-phosphate. Its function is as follows. Catalyzes the conversion of glucosamine-6-phosphate to glucosamine-1-phosphate. The sequence is that of Probable phosphoglucosamine mutase from Pyrococcus horikoshii (strain ATCC 700860 / DSM 12428 / JCM 9974 / NBRC 100139 / OT-3).